Consider the following 99-residue polypeptide: uncharacterized protein (99 aa).

The protein belongs to the ycf15 family.

The protein localises to the plastid. Its subcellular location is the chloroplast. This is an uncharacterized protein from Saccharum hybrid (Sugarcane).